The sequence spans 204 residues: Tetraspanin-13 (204 aa).

The Cytoplasmic segment spans residues 1 to 19; the sequence is MVCGGFSCSKNCLCALNLL. A helical membrane pass occupies residues 20–40; sequence YTLVSLLLIGIAAWGIGFGLI. Topologically, residues 41–44 are extracellular; that stretch reads SSLR. The chain crosses the membrane as a helical span at residues 45–65; the sequence is VVGVVIAVGIFLFLIALVGLI. Residues 66-72 lie on the Cytoplasmic side of the membrane; that stretch reads GAVKHHQ. A helical transmembrane segment spans residues 73-93; that stretch reads VLLFFYMIILLLVFIVQFSVS. Topologically, residues 94-167 are extracellular; the sequence is CACLALNREQ…IGEYAGEVLR (74 aa). N-linked (GlcNAc...) asparagine glycans are attached at residues asparagine 113 and asparagine 137. Serine 143 carries the phosphoserine modification. A helical transmembrane segment spans residues 168–188; it reads FVGGIGLFFSFTEILGVWLTY. The Cytoplasmic segment spans residues 189-204; it reads RYRNQKDPRANPSAFL.

This sequence belongs to the tetraspanin (TM4SF) family.

It localises to the membrane. The polypeptide is Tetraspanin-13 (Tspan13) (Mus musculus (Mouse)).